A 715-amino-acid chain; its full sequence is Chloroplastic group IIA intron splicing facilitator CRS1, chloroplastic (715 aa).

Over residues 1-21 (MAPPPLPLFSPSLKAPPPPPW) the composition is skewed to pro residues. The transit peptide at 1-40 (MAPPPLPLFSPSLKAPPPPPWLHGSSTQSRDSAPPVPPLP) directs the protein to the chloroplast. Positions 1 to 76 (MAPPPLPLFS…KPLTAGVPGG (76 aa)) are disordered. CRM domains lie at 168 to 265 (TELE…AKHS) and 350 to 447 (PTLA…GVAQ). Coiled-coil stretches lie at residues 448–473 (TVIQ…AVDS) and 502–550 (ENTE…KLHS). The CRM 3 domain maps to 562-662 (EHLTEEEKIM…KNYRRPAKSS (101 aa)).

Homodimer. Interacts with RNA, specifically with atpF intron. Part of large ribonucleo-protein complexes that include group IIA introns and CRS1. In terms of tissue distribution, more expressed in leaves than in roots.

Its subcellular location is the plastid. The protein resides in the chloroplast stroma. Functionally, required for the splicing of group IIA introns in chloroplasts, and especially for atpF, by regulating the intron folding. Forms splicing particles with RNA. Also involved in chloroplast protein translation. The chain is Chloroplastic group IIA intron splicing facilitator CRS1, chloroplastic (CRS1) from Zea mays (Maize).